We begin with the raw amino-acid sequence, 993 residues long: Replication protein 1a (993 aa).

A methyltransferase region spans residues arginine 50–glutamine 408. In terms of domain architecture, Alphavirus-like MT spans histidine 72–leucine 289. Residues alanine 525–proline 581 form a disordered region. A compositionally biased stretch (acidic residues) spans glutamate 542–aspartate 552. Residues aspartate 553–glutamine 562 show a composition bias toward basic and acidic residues. The span at serine 564–threonine 576 shows a compositional bias: low complexity. The region spanning isoleucine 682 to alanine 838 is the (+)RNA virus helicase ATP-binding domain. Positions leucine 711–tyrosine 975 are ATP-dependent helicase. Glycine 714–threonine 721 is a binding site for ATP. One can recognise a (+)RNA virus helicase C-terminal domain in the interval aspartate 839 to valine 993.

Belongs to the bromoviridae replication protein 1a family. Interacts with RNA-directed RNA polymerase 2a.

It is found in the host endoplasmic reticulum membrane. Its function is as follows. Involved in the virus replication. Contains a helicase domain and a methyltransferase domain. The methyltransferase domain is probably involved in viral RNA capping. Involved in the formation of ER membrane spherular invaginations in which RNA replication complexes form. This Canna (Florist's daisy) protein is Replication protein 1a.